The sequence spans 395 residues: Inner membrane protein YjgN (395 aa).

At 1–24 the chain is on the cytoplasmic side; the sequence is MNNVISSKDNHNHTLVFTGKGGKY. Residues 25–45 traverse the membrane as a helical segment; that stretch reads FVICLVNFLLTCITLGIYAPW. The Periplasmic portion of the chain corresponds to 46–71; the sequence is AMVKCRRYIYTNMTLNNQPFAYKATG. A helical transmembrane segment spans residues 72–92; it reads GALFISVLLVFIIYIVSLSLI. Topologically, residues 93 to 95 are cytoplasmic; sequence EHG. A helical membrane pass occupies residues 96-116; sequence HPGLGFTLFGLLIAIIPFMAV. Over 117-146 the chain is Periplasmic; it reads KGLQYQAMMTSLNGVHFGFQCSMRRAWWYM. A helical transmembrane segment spans residues 147-167; it reads FALPVLLMVALYIVLYIISLV. Residue Thr-168 is a topological domain, cytoplasmic. A helical membrane pass occupies residues 169-189; the sequence is IAVGGLVFSIVFLGLLAIIGI. Topologically, residues 190–229 are periplasmic; it reads GVINGITYSKWMTLFGNGANFGIHRFSIQVNVKTCIRGCV. A helical transmembrane segment spans residues 230-250; the sequence is LAMLTLFPFAVVIGYLIAPVF. Residues 251-275 lie on the Cytoplasmic side of the membrane; the sequence is TDMILLSMMGNAQAGGALILQYYGQ. A helical transmembrane segment spans residues 276-296; that stretch reads IMACYFLYFLAIIVVTSYLYV. Topologically, residues 297–327 are periplasmic; the sequence is ALRNLFLNNLSLANDSIRFHSSVTAHGMLWR. A helical transmembrane segment spans residues 328–348; the sequence is LLVVFVISGVTLGLAYPWLKI. Topologically, residues 349–395 are cytoplasmic; it reads WLVSWLAQNTQVQGDLDSLELTNDEKPLENSPLMWISRGIMPYFPFI.

The protein localises to the cell inner membrane. The sequence is that of Inner membrane protein YjgN (yjgN) from Salmonella typhimurium (strain LT2 / SGSC1412 / ATCC 700720).